Reading from the N-terminus, the 446-residue chain is ATP-dependent protease ATPase subunit HslU (446 aa).

Residues isoleucine 18, 60–65, aspartate 259, glutamate 324, and arginine 396 each bind ATP; that span reads GVGKTE.

The protein belongs to the ClpX chaperone family. HslU subfamily. As to quaternary structure, a double ring-shaped homohexamer of HslV is capped on each side by a ring-shaped HslU homohexamer. The assembly of the HslU/HslV complex is dependent on binding of ATP.

It is found in the cytoplasm. ATPase subunit of a proteasome-like degradation complex; this subunit has chaperone activity. The binding of ATP and its subsequent hydrolysis by HslU are essential for unfolding of protein substrates subsequently hydrolyzed by HslV. HslU recognizes the N-terminal part of its protein substrates and unfolds these before they are guided to HslV for hydrolysis. This is ATP-dependent protease ATPase subunit HslU from Baumannia cicadellinicola subsp. Homalodisca coagulata.